The primary structure comprises 137 residues: Large ribosomal subunit protein uL16 (137 aa).

Belongs to the universal ribosomal protein uL16 family. As to quaternary structure, part of the 50S ribosomal subunit.

In terms of biological role, binds 23S rRNA and is also seen to make contacts with the A and possibly P site tRNAs. This is Large ribosomal subunit protein uL16 from Rhodopseudomonas palustris (strain BisB5).